The chain runs to 514 residues: Major facilitator superfamily domain-containing protein 4A (514 aa).

The next 5 membrane-spanning stretches (helical) occupy residues 19-39 (LTYW…GPTL), 53-73 (ISWV…LGGV), 82-102 (LWAL…IPFC), 107-127 (VLAL…TVAN), and 139-159 (AVFL…SPLI). Residues N177 and N203 are each glycosylated (N-linked (GlcNAc...) asparagine). The next 7 membrane-spanning stretches (helical) occupy residues 221–241 (YAFW…LMLL), 307–327 (FFAI…LTGA), 347–367 (VAGY…LLSI), 376–396 (ATMV…LLIF), 400–420 (VVFL…TFPS), 438–458 (VLVT…GSIF), and 466–486 (FLVC…LLLF).

The protein belongs to the major facilitator superfamily.

The protein localises to the membrane. In Pongo abelii (Sumatran orangutan), this protein is Major facilitator superfamily domain-containing protein 4A (MFSD4A).